The following is a 117-amino-acid chain: Small ribosomal subunit protein bS6 (117 aa).

It belongs to the bacterial ribosomal protein bS6 family.

Its function is as follows. Binds together with bS18 to 16S ribosomal RNA. The polypeptide is Small ribosomal subunit protein bS6 (Roseobacter denitrificans (strain ATCC 33942 / OCh 114) (Erythrobacter sp. (strain OCh 114))).